Reading from the N-terminus, the 147-residue chain is Large ribosomal subunit protein uL15 (147 aa).

The disordered stretch occupies residues 1–42 (MTIKVHHLRPAPGAKTAKTRVGRGEGSKGKTAGRGTKGSKAR).

Belongs to the universal ribosomal protein uL15 family. As to quaternary structure, part of the 50S ribosomal subunit.

Binds to the 23S rRNA. This is Large ribosomal subunit protein uL15 from Salinispora arenicola (strain CNS-205).